Here is a 153-residue protein sequence, read N- to C-terminus: UPF0251 protein CT0950 (153 aa).

It belongs to the UPF0251 family.

This Chlorobaculum tepidum (strain ATCC 49652 / DSM 12025 / NBRC 103806 / TLS) (Chlorobium tepidum) protein is UPF0251 protein CT0950.